A 586-amino-acid polypeptide reads, in one-letter code: Frizzled-10-A (586 aa).

The N-terminal stretch at 1 to 26 is a signal peptide; the sequence is MDVSGVTGLLRGTALLLVLAAALCSA. Over 27 to 230 the chain is Extracellular; sequence ISSINPDRSG…DVYWSKDDKK (204 aa). Residues 35-156 enclose the FZ domain; the sequence is SGDGRCQAIE…NDPNYLCMEA (122 aa). Cystine bridges form between C40-C101, C48-C94, C85-C123, C112-C153, and C116-C140. An N-linked (GlcNAc...) asparagine glycan is attached at N54. N-linked (GlcNAc...) asparagine glycosylation is present at N159. Residues 161–199 form a disordered region; the sequence is TDETPRGSSMLPPIFRPQRPSSGHEIYPKDPTSRSSCEN. Residues 231 to 251 form a helical membrane-spanning segment; it reads FAFIWIAIWSILCFFSSAFTV. Topologically, residues 252–267 are cytoplasmic; sequence LTFLVDPLRFKYPERP. The helical transmembrane segment at 268 to 288 threads the bilayer; it reads IIFLSMCYCVYSVGYIIRLFA. Residues 289–315 lie on the Extracellular side of the membrane; that stretch reads GADSIACDRDSGQLYVIQEGLESTGCT. Residues 316 to 336 traverse the membrane as a helical segment; that stretch reads IVFLILYYFGMASSLWWVILT. Over 337-356 the chain is Cytoplasmic; that stretch reads LTWFLAAGKKWGHEAIEANS. The helical transmembrane segment at 357–377 threads the bilayer; sequence SYFHLAAWAIPAVKTIMILVM. The Extracellular portion of the chain corresponds to 378–401; it reads RRVAGDELTGVCYVGSMDVNALTG. The chain crosses the membrane as a helical span at residues 402 to 422; it reads FVLIPLACYLIIGTSFILSGF. Topologically, residues 423 to 448 are cytoplasmic; the sequence is VALFHIRRVMKTGGENTDKLEKLMVR. Residues 449–469 traverse the membrane as a helical segment; that stretch reads IGVFSVLYTVPATCVIACYFY. Residues 470 to 507 are Extracellular-facing; sequence ERLNMDFWKILATQDKCKMDSQTKTLDCTMTSSIPAVE. A helical transmembrane segment spans residues 508–528; that stretch reads IFMVKIFMLLVVGITSGMWIW. Residues 529–586 are Cytoplasmic-facing; the sequence is TSKTVQSWQNVFSKRLKKRNRSKPASVITSAGIYKKPQHPPKVHHGKYESALQSPTCV. The Lys-Thr-X-X-X-Trp motif, mediates interaction with the PDZ domain of Dvl family members motif lies at 531-536; it reads KTVQSW. Positions 563 to 586 are disordered; it reads KKPQHPPKVHHGKYESALQSPTCV. The span at 564 to 573 shows a compositional bias: basic residues; that stretch reads KPQHPPKVHH. The PDZ-binding motif lies at 584–586; it reads TCV.

Belongs to the G-protein coupled receptor Fz/Smo family. Expressed in liver, lung, brain, testis, stomach, kidney, eye, skeletal muscle and skin.

The protein localises to the cell membrane. In terms of biological role, receptor for Wnt proteins. Most of frizzled receptors are coupled to the beta-catenin canonical signaling pathway, which leads to the activation of disheveled proteins, inhibition of GSK-3 kinase, nuclear accumulation of beta-catenin and activation of Wnt target genes. A second signaling pathway involving PKC and calcium fluxes has been seen for some family members, but it is not yet clear if it represents a distinct pathway or if it can be integrated in the canonical pathway, as PKC seems to be required for Wnt-mediated inactivation of GSK-3 kinase. Both pathways seem to involve interactions with G-proteins. May be involved in transduction and intercellular transmission of polarity information during tissue morphogenesis and/or in differentiated tissues. Activated by Wnt8. Could have an antagonizing activity in the morphogenesis during development. The chain is Frizzled-10-A (fzd10-a) from Xenopus laevis (African clawed frog).